The primary structure comprises 368 residues: Quinolinate synthase (368 aa).

Iminosuccinate contacts are provided by histidine 46 and serine 63. Cysteine 110 serves as a coordination point for [4Fe-4S] cluster. Iminosuccinate is bound by residues 141 to 143 (YVN) and serine 162. [4Fe-4S] cluster is bound at residue cysteine 230. Iminosuccinate is bound by residues 256 to 258 (HPE) and threonine 273. Cysteine 320 contributes to the [4Fe-4S] cluster binding site.

This sequence belongs to the quinolinate synthase family. Type 3 subfamily. It depends on [4Fe-4S] cluster as a cofactor.

The protein resides in the cytoplasm. The catalysed reaction is iminosuccinate + dihydroxyacetone phosphate = quinolinate + phosphate + 2 H2O + H(+). It functions in the pathway cofactor biosynthesis; NAD(+) biosynthesis; quinolinate from iminoaspartate: step 1/1. Catalyzes the condensation of iminoaspartate with dihydroxyacetone phosphate to form quinolinate. This is Quinolinate synthase from Bacillus cytotoxicus (strain DSM 22905 / CIP 110041 / 391-98 / NVH 391-98).